A 390-amino-acid chain; its full sequence is MQFKKLTEQSLAGKRVLIRVDMNVPVKNGVIGDDTRIRASLPSILHCLKAGASVILMTHLGRPTEGEPKPEDSLAPVARRLSELLAQEVKVIADWQAGIDLKAGDVVMLENVRLNKGEKKNNEELGRAYAGLCDVFVNDAFGTAHRAEASTHAVAQFAPVACAGVLLAAELDALGRALEAPARPLVAIVAGSKVSTKLTILEALADKVDQLIVGGGIANTFLLAEGKNIGKSLAEADLVGEAKKVIEKIRAHGGNVPLPTDVVVAPEFSENAEDTLKNVADVTRDDMILDIGPDSARVLAEIVAKAGTVVWNGPVGVFEFEQFSHGTRTLAEAIAESKAFSIAGGGDTLSAIAKFGVTDRISYISTGGGAFLEFLEGKELPAVAMLAARA.

Residues 21–23, arginine 36, 59–62, arginine 113, and arginine 146 contribute to the substrate site; these read DMN and HLGR. Residues lysine 197, glutamate 319, and 345 to 348 contribute to the ATP site; that span reads GGDT.

This sequence belongs to the phosphoglycerate kinase family. In terms of assembly, monomer.

It is found in the cytoplasm. It catalyses the reaction (2R)-3-phosphoglycerate + ATP = (2R)-3-phospho-glyceroyl phosphate + ADP. It participates in carbohydrate degradation; glycolysis; pyruvate from D-glyceraldehyde 3-phosphate: step 2/5. This is Phosphoglycerate kinase from Laribacter hongkongensis (strain HLHK9).